The chain runs to 340 residues: Alpha-1,3-galactosyltransferase 2 (340 aa).

Topologically, residues 1 to 12 (MALKEGLRAWKR) are cytoplasmic. A helical; Signal-anchor for type II membrane protein membrane pass occupies residues 13–32 (IFWRQILLTLGLLGLFLYGL). Residues 33-340 (PKFRHLEALI…APKGYRLLRN (308 aa)) lie on the Lumenal side of the membrane. N58 and N100 each carry an N-linked (GlcNAc...) asparagine glycan. Mn(2+) is bound by residues D199 and D201.

This sequence belongs to the glycosyltransferase 6 family. The cofactor is Mn(2+). Expressed in thymus and monocyte derived dendritic cells.

It localises to the golgi apparatus. It is found in the golgi stack membrane. It carries out the reaction a beta-D-galactosyl-(1-&gt;4)-N-acetyl-beta-D-glucosaminyl derivative + UDP-alpha-D-galactose = an alpha-D-galactosyl-(1-&gt;3)-beta-D-galactosyl-(1-&gt;4)-N-acetyl-beta-D-glucosaminyl derivative + UDP + H(+). The catalysed reaction is a beta-D-Gal-(1-&gt;4)-beta-D-Glc-(1&lt;-&gt;1)-Cer(d18:1(4E)) + UDP-alpha-D-galactose = an isogloboside iGb3Cer (d18:1(4E)) + UDP + H(+). The enzyme catalyses a globoside Gb3Cer + UDP-alpha-D-galactose = a globoside GalGb3Cer + UDP + H(+). In terms of biological role, synthesizes the galactose-alpha(1,3)-galactose group on the glycosphingolipid isoglobotrihexosylceramide or isogloboside 3 (iGb3) by catalyzing the transfer of galactose from UDP-Galactose to its acceptor molecule Gal-beta-1,4-Glc-ceramide. Can also catalyze the addition of galactose to iGb3 itself to form polygalactose structures. The sequence is that of Alpha-1,3-galactosyltransferase 2 from Homo sapiens (Human).